A 733-amino-acid chain; its full sequence is Hypermethylated in cancer 1 protein (733 aa).

In terms of domain architecture, BTB spans 47–110 (CDVIIVVQNA…IYTGRLADGA (64 aa)). The interval 154–315 (KYCHLRGGGG…PFRGGSGSPG (162 aa)) is mediates HDAC-dependent transcriptional repression. Arg159 bears the Omega-N-methylarginine mark. The disordered stretch occupies residues 189-209 (YPSPVGPPPPPAAEPPSGPEA). Positions 192–206 (PVGPPPPPAAEPPSG) are enriched in pro residues. Position 237 is a phosphoserine (Ser237). The interaction with CTBP1 stretch occupies residues 241–247 (GLDLSKK). Positions 241-421 (GLDLSKKSPP…PGGHLEGYPC (181 aa)) are disordered. The residue at position 248 (Ser248) is a Phosphoserine. Positions 284-293 (LALPSLPPLP) are enriched in pro residues. Lys333 is subject to N6-acetyllysine; alternate. Lys333 participates in a covalent cross-link: Glycyl lysine isopeptide (Lys-Gly) (interchain with G-Cter in SUMO); alternate. Residues 344-361 (ELGRERGSPSERCEERGG) show a composition bias toward basic and acidic residues. Ser366 is modified (phosphoserine). The segment covering 368–380 (GGPPLGLAPPPRY) has biased composition (pro residues). C2H2-type zinc fingers lie at residues 439-459 (CIPC…VEAH), 509-529 (CASC…EKTH), 537-557 (CTIC…MRSH), 565-585 (CDAC…MRIH), and 593-613 (CQVC…MKMH). Position 704 is a phosphoserine (Ser704).

The protein belongs to the krueppel C2H2-type zinc-finger protein family. Hic subfamily. In terms of assembly, self-associates. Interacts with HIC2. Interacts with CTBP1 and CTBP2. Interacts with TCF7L2 and ARID1A. Interacts with MTA1 and MBD3; indicative for an association with the NuRD complex. Interacts with SIRT1. Acetylated on several residues, including Lys-333. Lys-333 is deacetylated by SIRT1. Post-translationally, sumoylated on Lys-333 by a PIAS family member, which enhances interaction with MTA1, positively regulates transcriptional repression activity and is enhanced by HDAC4. In terms of tissue distribution, ubiquitously expressed with highest levels found in lung, colon, prostate, thymus, testis and ovary. Expression is absent or decreased in many tumor cells.

It is found in the nucleus. In terms of biological role, transcriptional repressor. Recognizes and binds to the consensus sequence '5-[CG]NG[CG]GGGCA[CA]CC-3'. May act as a tumor suppressor. Involved in development of head, face, limbs and ventral body wall. Involved in down-regulation of SIRT1 and thereby is involved in regulation of p53/TP53-dependent apoptotic DNA-damage responses. The specific target gene promoter association seems to be depend on corepressors, such as CTBP1 or CTBP2 and MTA1. In cooperation with MTA1 (indicative for an association with the NuRD complex) represses transcription from CCND1/cyclin-D1 and CDKN1C/p57Kip2 specifically in quiescent cells. Involved in regulation of the Wnt signaling pathway probably by association with TCF7L2 and preventing TCF7L2 and CTNNB1 association with promoters of TCF-responsive genes. Seems to repress transcription from E2F1 and ATOH1 which involves ARID1A, indicative for the participation of a distinct SWI/SNF-type chromatin-remodeling complex. Probably represses transcription of ACKR3, FGFBP1 and EFNA1. This Homo sapiens (Human) protein is Hypermethylated in cancer 1 protein (HIC1).